The chain runs to 1533 residues: Glycogen debranching enzyme (1533 aa).

Ser64 is modified (phosphoserine). Active-site residues include Asp527, His530, and Asp628.

Belongs to the glycogen debranching enzyme family. As to quaternary structure, monomer. Interacts with NHLRC1/malin. Ubiquitinated. In terms of tissue distribution, ubiquitous. Expressed in striated skeletal muscle, heart, liver, spleen, skin, spinal cord, lung, kidney and testicle.

The protein resides in the cytoplasm. It catalyses the reaction Transfers a segment of a (1-&gt;4)-alpha-D-glucan to a new position in an acceptor, which may be glucose or a (1-&gt;4)-alpha-D-glucan.. The catalysed reaction is Hydrolysis of (1-&gt;6)-alpha-D-glucosidic branch linkages in glycogen phosphorylase limit dextrin.. Functionally, multifunctional enzyme acting as 1,4-alpha-D-glucan:1,4-alpha-D-glucan 4-alpha-D-glycosyltransferase and amylo-1,6-glucosidase in glycogen degradation. The sequence is that of Glycogen debranching enzyme from Equus caballus (Horse).